A 258-amino-acid polypeptide reads, in one-letter code: SLA class II histocompatibility antigen, DQ haplotype D beta chain (258 aa).

The first 31 residues, 1–31 (MVALRLPRGLWTAALTVMLVVLGAPVAEGRD), serve as a signal peptide directing secretion. The interval 32 to 123 (SPQDFVVQFK…IEEGTTLQRR (92 aa)) is beta-1. The Extracellular portion of the chain corresponds to 32-227 (SPQDFVVQFK…RAQSESAQSK (196 aa)). Disulfide bonds link Cys-44/Cys-108 and Cys-146/Cys-202. N-linked (GlcNAc...) asparagine glycosylation occurs at Asn-48. The interval 124 to 217 (VQPTVTISPS…SLQSPILVEW (94 aa)) is beta-2. Residues 126-230 (PTVTISPSKA…SESAQSKMLS (105 aa)) form the Ig-like C1-type domain. Positions 218–227 (RAQSESAQSK) are connecting peptide. The helical transmembrane segment at 228-248 (MLSGVGGFVLGLIFLGLGLFI) threads the bilayer. Topologically, residues 249–258 (RHRSQKGLVR) are cytoplasmic.

The protein belongs to the MHC class II family.

It is found in the membrane. This chain is SLA class II histocompatibility antigen, DQ haplotype D beta chain, found in Sus scrofa (Pig).